Consider the following 349-residue polypeptide: Hydroxymethylglutaryl-CoA synthase (349 aa).

(3S)-3-hydroxy-3-methylglutaryl-CoA-binding residues include aspartate 30 and alanine 31. The active-site Proton donor/acceptor is glutamate 82. The (3S)-3-hydroxy-3-methylglutaryl-CoA site is built by cysteine 114 and threonine 155. The Acyl-thioester intermediate role is filled by cysteine 114. Position 203 (arginine 203) interacts with CoA. Positions 205 and 238 each coordinate (3S)-3-hydroxy-3-methylglutaryl-CoA. Histidine 238 (proton donor/acceptor) is an active-site residue. Residue lysine 243 participates in CoA binding. Asparagine 270 and serine 300 together coordinate (3S)-3-hydroxy-3-methylglutaryl-CoA.

This sequence belongs to the thiolase-like superfamily. Archaeal HMG-CoA synthase family. Interacts with acetoacetyl-CoA thiolase that catalyzes the precedent step in the pathway and with a DUF35 protein. The acetoacetyl-CoA thiolase/HMG-CoA synthase complex channels the intermediate via a fused CoA-binding site, which allows for efficient coupling of the endergonic thiolase reaction with the exergonic HMGCS reaction.

It catalyses the reaction acetoacetyl-CoA + acetyl-CoA + H2O = (3S)-3-hydroxy-3-methylglutaryl-CoA + CoA + H(+). Its pathway is metabolic intermediate biosynthesis; (R)-mevalonate biosynthesis; (R)-mevalonate from acetyl-CoA: step 2/3. Functionally, catalyzes the condensation of acetyl-CoA with acetoacetyl-CoA to form 3-hydroxy-3-methylglutaryl-CoA (HMG-CoA). Functions in the mevalonate (MVA) pathway leading to isopentenyl diphosphate (IPP), a key precursor for the biosynthesis of isoprenoid compounds that are building blocks of archaeal membrane lipids. The chain is Hydroxymethylglutaryl-CoA synthase from Methanococcus maripaludis (strain C6 / ATCC BAA-1332).